The primary structure comprises 253 residues: L-cysteine S-thiosulfotransferase subunit SoxA (253 aa).

The first 17 residues, 1–17 (MGKWVTIIFVLFLYAIA), serve as a signal peptide directing secretion. The Cytochrome c domain occupies 44 to 129 (VYAEQGRDMF…SIATYVATLS (86 aa)). Heme c is bound by residues C64, C67, H68, C102, C165, C168, and H169. A substrate-binding site is contributed by R210. C214 is a binding site for heme c. The active-site Cysteine persulfide intermediate is C214.

It belongs to the SoxA family. As to quaternary structure, heterodimer of SoxA and SoxX. Requires heme c as cofactor. Post-translationally, cysteine persulfide at Cys-214.

It localises to the periplasm. The enzyme catalyses L-cysteinyl-[SoxY protein] + thiosulfate + 2 Fe(III)-[cytochrome c] = S-sulfosulfanyl-L-cysteinyl-[SoxY protein] + 2 Fe(II)-[cytochrome c] + 2 H(+). The catalysed reaction is S-sulfanyl-L-cysteinyl-[SoxY protein] + thiosulfate + 2 Fe(III)-[cytochrome c] = S-(2-sulfodisulfanyl)-L-cysteinyl-[SoxY protein] + 2 Fe(II)-[cytochrome c] + 2 H(+). In terms of biological role, C-type diheme cytochrome, which is part of the SoxAX cytochrome complex involved in sulfur oxidation. The SoxAX complex catalyzes the formation of a heterodisulfide bond between the conserved cysteine residue on a sulfur carrier SoxYZ complex subunit SoxY and thiosulfate or other inorganic sulfur substrates. This leads to the liberation of two electrons, which may be transferred from the SoxAX complex to another cytochrome c that then channels them into the respiratory electron transport chain. Some electrons may be used for reductive CO(2) fixation. This chain is L-cysteine S-thiosulfotransferase subunit SoxA, found in Hydrogenobacter thermophilus (strain DSM 6534 / IAM 12695 / TK-6).